The chain runs to 309 residues: Methionyl-tRNA formyltransferase (309 aa).

112-115 (SLLP) is a (6S)-5,6,7,8-tetrahydrofolate binding site.

Belongs to the Fmt family.

The enzyme catalyses L-methionyl-tRNA(fMet) + (6R)-10-formyltetrahydrofolate = N-formyl-L-methionyl-tRNA(fMet) + (6S)-5,6,7,8-tetrahydrofolate + H(+). Attaches a formyl group to the free amino group of methionyl-tRNA(fMet). The formyl group appears to play a dual role in the initiator identity of N-formylmethionyl-tRNA by promoting its recognition by IF2 and preventing the misappropriation of this tRNA by the elongation apparatus. This chain is Methionyl-tRNA formyltransferase, found in Bartonella tribocorum (strain CIP 105476 / IBS 506).